The chain runs to 158 residues: Lectin-like protein EP153R (158 aa).

Residues 1-26 (MFLNKKYPSLIEKKMDDLMTLKFCYL) lie on the Cytoplasmic side of the membrane. The helical transmembrane segment at 27 to 47 (IITFLIITNIFSLAINIWGGG) threads the bilayer. Topologically, residues 48 to 158 (DMIDRQSCEN…YTETFFICSN (111 aa)) are extracellular. Cysteines 61 and 72 form a disulfide. The interval 61 to 157 (CPKDWVGYNN…KYTETFFICS (97 aa)) is lectin-like. Residues N81, N94, N100, N106, N112, N119, and N139 are each glycosylated (N-linked (GlcNAc...) asparagine; by host).

The protein belongs to the asfivirus lectin-like protein family. In terms of assembly, homodimer.

The protein localises to the host endoplasmic reticulum membrane. In terms of biological role, down-regulates MHC-I expression by impairing the appropriate configuration or presentation into the plasma membrane of the latter. Participates in viral hemadsorption, which may help viral spread. Reduces the transactivating activity of host TP53, thus inhibiting apoptosis. Non-essential for virus growth in swine macrophage cell cultures. In African swine fever virus (isolate Pig/Kenya/KEN-50/1950) (ASFV), this protein is Lectin-like protein EP153R.